The primary structure comprises 196 residues: Phosphoheptose isomerase (196 aa).

The 160-residue stretch at 34 to 193 folds into the SIS domain; sequence LIETFKIGNK…EQGLFGIFAG (160 aa). Residue 49 to 51 coordinates substrate; that stretch reads NGG. Zn(2+)-binding residues include His-58 and Glu-62. Substrate-binding positions include Glu-62, 91–92, 117–119, Ser-122, and Gln-169; these read ND and STS. Residues Gln-169 and His-177 each coordinate Zn(2+).

It belongs to the SIS family. GmhA subfamily. Homotetramer. It depends on Zn(2+) as a cofactor.

It is found in the cytoplasm. It catalyses the reaction 2 D-sedoheptulose 7-phosphate = D-glycero-alpha-D-manno-heptose 7-phosphate + D-glycero-beta-D-manno-heptose 7-phosphate. The protein operates within carbohydrate biosynthesis; D-glycero-D-manno-heptose 7-phosphate biosynthesis; D-glycero-alpha-D-manno-heptose 7-phosphate and D-glycero-beta-D-manno-heptose 7-phosphate from sedoheptulose 7-phosphate: step 1/1. Catalyzes the isomerization of sedoheptulose 7-phosphate in D-glycero-D-manno-heptose 7-phosphate. The chain is Phosphoheptose isomerase from Trichlorobacter lovleyi (strain ATCC BAA-1151 / DSM 17278 / SZ) (Geobacter lovleyi).